The following is a 315-amino-acid chain: NAD(P)H-dependent anabolic L-arginine dehydrogenase DauB (315 aa).

Belongs to the ornithine cyclodeaminase/mu-crystallin family.

The enzyme catalyses L-arginine + NAD(+) + H2O = 5-guanidino-2-oxopentanoate + NH4(+) + NADH + H(+). The catalysed reaction is L-arginine + NADP(+) + H2O = 5-guanidino-2-oxopentanoate + NH4(+) + NADPH + H(+). Its function is as follows. Involved in the anabolism of D-lysine and D-arginine. Under aerobic conditions, the arginine succinyltransferase (AST) and arginine transaminase (ATA) pathways are 2 major routes for L-arginine utilization as the sole source of carbon and nitrogen. The D-to-L racemization of arginine by DauA and DauB is necessary, before to be channeled into the AST and/or ATA pathways. DauB catalyzes the synthesis of L-arginine from 2-ketoarginine (2-KA) and ammonium. This chain is NAD(P)H-dependent anabolic L-arginine dehydrogenase DauB, found in Pseudomonas aeruginosa (strain ATCC 15692 / DSM 22644 / CIP 104116 / JCM 14847 / LMG 12228 / 1C / PRS 101 / PAO1).